Here is a 379-residue protein sequence, read N- to C-terminus: Dual-specificity RNA methyltransferase RlmN (379 aa).

The active-site Proton acceptor is Glu95. The Radical SAM core domain maps to 101–345 (EETRGTLCVS…TTVRKTRGDD (245 aa)). The cysteines at positions 108 and 350 are disulfide-linked. Residues Cys115, Cys119, and Cys122 each contribute to the [4Fe-4S] cluster site. S-adenosyl-L-methionine contacts are provided by residues 176–177 (GE), Ser208, 230–232 (SLH), and Asn307. The S-methylcysteine intermediate role is filled by Cys350.

It belongs to the radical SAM superfamily. RlmN family. The cofactor is [4Fe-4S] cluster.

Its subcellular location is the cytoplasm. The catalysed reaction is adenosine(2503) in 23S rRNA + 2 reduced [2Fe-2S]-[ferredoxin] + 2 S-adenosyl-L-methionine = 2-methyladenosine(2503) in 23S rRNA + 5'-deoxyadenosine + L-methionine + 2 oxidized [2Fe-2S]-[ferredoxin] + S-adenosyl-L-homocysteine. It carries out the reaction adenosine(37) in tRNA + 2 reduced [2Fe-2S]-[ferredoxin] + 2 S-adenosyl-L-methionine = 2-methyladenosine(37) in tRNA + 5'-deoxyadenosine + L-methionine + 2 oxidized [2Fe-2S]-[ferredoxin] + S-adenosyl-L-homocysteine. Specifically methylates position 2 of adenine 2503 in 23S rRNA and position 2 of adenine 37 in tRNAs. m2A2503 modification seems to play a crucial role in the proofreading step occurring at the peptidyl transferase center and thus would serve to optimize ribosomal fidelity. This is Dual-specificity RNA methyltransferase RlmN from Burkholderia vietnamiensis (strain G4 / LMG 22486) (Burkholderia cepacia (strain R1808)).